Consider the following 1483-residue polypeptide: Rho GTPase-activating protein 23 (1483 aa).

The tract at residues 15-34 (PEPRPPQLPLGPRDGCSSGR) is disordered. One can recognise a PDZ domain in the interval 71–155 (HCILKEEENG…TLELSIMPKD (85 aa)). 2 disordered regions span residues 212–276 (ISAL…PGSR) and 300–345 (AGER…GQEG). Residues 316-325 (SQDRLEDVTT) show a composition bias toward basic and acidic residues. Residues 331 to 342 (CSTSQDALSQLG) are compositionally biased toward polar residues. Residues Ser361 and Ser372 each carry the phosphoserine modification. The tract at residues 385-407 (PSARTSACPSRDLTQAPPPSGLQ) is disordered. Ser421 carries the phosphoserine modification. 2 disordered regions span residues 448–485 (SLAQ…DHRD) and 508–527 (NLGF…RLGR). Phosphoserine is present on residues Ser515, Ser579, Ser607, and Ser619. The residue at position 652 (Thr652) is a Phosphothreonine. Residues Ser655, Ser658, and Ser673 each carry the phosphoserine modification. A PH domain is found at 684-804 (DIRREGWLYY…WIRAIRENSR (121 aa)). Positions 827 to 848 (KVSHSSGPKADSSPKGSRGLGG) are disordered. Lys850 participates in a covalent cross-link: Glycyl lysine isopeptide (Lys-Gly) (interchain with G-Cter in SUMO2). Disordered regions lie at residues 860 to 879 (RGLR…VAAP), 1093 to 1150 (FSDD…SWVP), 1171 to 1361 (KRKK…GSRP), and 1419 to 1469 (ELGG…LQGL). A Rho-GAP domain is found at 901-1093 (IRLEECQPAT…TLIQHSDWFF (193 aa)). The span at 1099–1110 (KGERTPVDDKEP) shows a compositional bias: basic and acidic residues. Composition is skewed to polar residues over residues 1133–1144 (GSDSTTCSSAKS) and 1236–1248 (SIVS…STMD). A compositionally biased stretch (low complexity) spans 1338 to 1351 (GSASSSSQESLRPP). Residues 1440–1457 (SGLSSLESTKARASSAAS) are compositionally biased toward polar residues.

Its function is as follows. GTPase activator for the Rho-type GTPases by converting them to an inactive GDP-bound state. The protein is Rho GTPase-activating protein 23 (Arhgap23) of Mus musculus (Mouse).